The chain runs to 303 residues: Methionyl-tRNA formyltransferase (303 aa).

Position 108–111 (108–111 (SDLP)) interacts with (6S)-5,6,7,8-tetrahydrofolate.

This sequence belongs to the Fmt family.

It catalyses the reaction L-methionyl-tRNA(fMet) + (6R)-10-formyltetrahydrofolate = N-formyl-L-methionyl-tRNA(fMet) + (6S)-5,6,7,8-tetrahydrofolate + H(+). Attaches a formyl group to the free amino group of methionyl-tRNA(fMet). The formyl group appears to play a dual role in the initiator identity of N-formylmethionyl-tRNA by promoting its recognition by IF2 and preventing the misappropriation of this tRNA by the elongation apparatus. This is Methionyl-tRNA formyltransferase from Rickettsia canadensis (strain McKiel).